The chain runs to 1355 residues: MSSDYTDRNNLASAIKTLGDMLEKDEAFQRLMYNASTKGEINRGRVNKVFLKALLSAGDKVGEFLNELIDHLNLFKVLGDFSWNPPVLKEAELNERTSQLRTQQHKYVERVSGFSHYGFGETGTPARGDITSPRGPQVASIEEDLATSKLAELLLAVGDHLEKIEKKGQFLPENVERFSLDCFITSESVKLSSEAVELAPCYTEPVIIQRSKEQTEKYCQEYVRSPHTSSHLLSNDKTQSIRIGQLFSPDSDGNTPKTVILCGDSGRGKSFVLEKIILDWVHLEHHFENFDAVFLLKYEELKCLSEEMSLTELLSRSCSLTSDQISQILQLTPEKVLFLIDGIDDFSFNAHIQISSPTDPSQKAPVISIIHCLMRDLLLVESSVIVTTRYTAAAELSSLCKRPQRFTEIEGFSERRVQEYFQKFFQDEQLFKKAYESMKTNETLLTFCSVPLLCWMVCFCLKKDADQVMTELKTTTSIYVHFVSTLLEDHHQSQSFLRSLGQLAEEGMKNRQNLFDEKSVTRTGLDPATRVFMNKIYLKRKKKHELLFKFKHLSFQEFFAALYYIMLDEEESWCKVSELFNMMESEALIHRSPPIFRGRLSNPIPSVMMFLCGLFNKKVSSSLFEKMKSTFSHNVKLKKKELKKKLMKMIPAMIRQYGFELFALHCLYELQDERFVTKVLETHKFIDLSNVSLRSTDCLVLCYCLRLCPNIRELNFMNCDLTAAKLKILQPALGLCETLRFSVEHLSEIGDLIQILSESKILRELKVREDEYGVESPRWSFNLSVTRGDVLLTLSSSEKNPSFSSVLNIRLTCAQSQISRTDWTLFLQRLRKTGTLTEDSSADDDHVSLQLSSLHSVGLKSLDLTLVSLNESWASGIISLIQNCTSLQQLKVSVTGLLLEEGLKLLKKSLTDPHCTVIIEGRRNCSEPSEEHLRQSYEKVEIHFKPKLLEELAELSICNPGSSALNIHCQSCVDVADSDQWVQVEPSVCRGEGGTEFRITTPAGRFQCSRTRMRWVCDGDVTLHYRAVDGHFLNAELERLQCERVAPVLDVNVISGKLEEAHLPHYMCLAESDPALTNAVKLLSVEDEGISLESVELTRFHAKILQPMFSPKTVLVKLGIPVKVHCDLLIFMTHTCPIILNVYFFPSDSLVEENIKTEEKSSHQIKCSRPEAPLQMKKQHSLEVPDAVVQPEAIKLRGNMKPNFFQVKQPVVNDITMILSRVDDQKSVWTGTIWKKLIDIKLNKTESDLFQSGQKHKTSQPAHSFDKAQFFDTHWCNLIKSVENVDTVADKLLQKQIIHEQFYSEIIHHKSTSEESMRKICVIVRKGSAAVKEIFISILLQENPNLLNHLPSSDS.

One can recognise an NACHT domain in the interval 257 to 458 (KTVILCGDSG…SVPLLCWMVC (202 aa)). An ATP-binding site is contributed by 263-270 (GDSGRGKS). The ZU5 stretch occupies residues 977–1109 (DSDQWVQVEP…FHAKILQPMF (133 aa)). One can recognise an FIIND domain in the interval 977–1252 (DSDQWVQVEP…NKTESDLFQS (276 aa)). Residues 1110-1252 (SPKTVLVKLG…NKTESDLFQS (143 aa)) form a UPA region. Positions 1278 to 1354 (LIKSVENVDT…NLLNHLPSSD (77 aa)) constitute a CARD domain.

This sequence belongs to the NLRP family. Interacts with the C-terminal part of nlrp1 (NACHT, LRR and PYD domains-containing protein 1, C-terminus) in absence of pathogens and other damage-associated signals. In terms of assembly, interacts with the N-terminal part of nlrp1 (NACHT, LRR and PYD domains-containing protein 1, N-terminus) in absence of pathogens and other damage-associated signals. Homomultimer; forms the nlrp1 inflammasome polymeric complex, a filament composed of homopolymers of this form in response to pathogens and other damage-associated signals. The nlrp1 inflammasome polymeric complex associates with pycard/asc. Interacts (via CARD domain) with pycard/asc (via CARD domain); leading to pro-inflammatory caspases (caspa and/or caspb) recruitment. Pro-caspase-a and pro-caspase-b filament formation increases local enzyme concentration, resulting in trans-autocleavage and activation. Active caspa and caspb then processes il1b and il18 precursors, leading to the release of mature cytokines in the extracellular milieu and inflammatory response. Autocatalytically cleaved. Autocatalytic cleavage in FIIND region occurs constitutively, prior to activation signals, and is required for inflammasome activity (IL1B release), possibly by facilitating pro-inflammatory caspases (caspa and/or caspb) binding. Both N- and C-terminal parts remain associated non-covalently. Post-translationally, ubiquitinated in response to pathogen-associated signals, leading to its degradation by the proteasome and subsequent release of the cleaved C-terminal part of the protein (NACHT, LRR and PYD domains-containing protein 1, C-terminus), which polymerizes and forms the nlrp1 inflammasome. Expressed in adult spleen, head kidney, gill and skin and also in the embryo.

The protein localises to the cytoplasm. It localises to the inflammasome. Its activity is regulated as follows. nlrp1 inflammasome is activated by pathogens and other damage-associated signals: activation promotes ubiquitination and degradation of the N-terminal part, releasing the cleaved C-terminal part of the protein (NACHT, LRR and PYD domains-containing protein 1, C-terminus), which polymerizes and forms the nlrp1 inflammasome. Functionally, acts as the sensor component of the nlrp1 inflammasome, which mediates inflammasome activation in response to various pathogen-associated signals, leading to subsequent pyroptosis. Inflammasomes are supramolecular complexes that assemble in the cytosol in response to pathogens and other damage-associated signals and play critical roles in innate immunity and inflammation. Acts as a recognition receptor (PRR): recognizes specific pathogens and other damage-associated signals, and mediates the formation of the inflammasome polymeric complex. In response to pathogen-associated signals, the N-terminal part of nlrp1 is degraded by the proteasome, releasing the cleaved C-terminal part of the protein (NACHT, LRR and PYD domains-containing protein 1, C-terminus), which polymerizes to initiate the formation of the inflammasome complex: the inflammasome recruits and activate pro-inflammatory caspases (caspa and/or caspb), leading to pyroptosis. Constitutes the precursor of the nlrp1 inflammasome, which mediates autoproteolytic processing within the FIIND domain to generate the N-terminal and C-terminal parts, which are associated non-covalently in absence of pathogens and other damage-associated signals. In terms of biological role, regulatory part that prevents formation of the nlrp1 inflammasome: in absence of pathogens and other damage-associated signals, interacts with the C-terminal part of nlrp1 (NACHT, LRR and PYD domains-containing protein 1, C-terminus), preventing activation of the nlrp1 inflammasome. In response to pathogen-associated signals, this part is ubiquitinated and degraded by the proteasome, releasing the cleaved C-terminal part of the protein, which polymerizes and forms the nlrp1 inflammasome. Its function is as follows. Constitutes the active part of the nlrp1 inflammasome. In absence of pathogens and other damage-associated signals, interacts with the N-terminal part of nlrp1 (NACHT, LRR and PYD domains-containing protein 1, N-terminus), preventing activation of the nlrp1 inflammasome. In response to pathogen-associated signals, the N-terminal part of nlrp1 is degraded by the proteasome, releasing this form, which polymerizes to form the nlrp1 inflammasome complex: the nlrp1 inflammasome complex then directly recruits and activates pro-inflammatory caspases (caspa and/or caspb) activation, leading to subsequent pyroptosis. This Danio rerio (Zebrafish) protein is NACHT, LRR and PYD domains-containing protein 1 homolog.